Consider the following 469-residue polypeptide: MSAPRTLYDKIFDDHVVDRQDDGTCLLYIDRHLVHEVTSPQAFEGLRLSGRKVRHPEKTLAVVDHNVSTSPERKFGIKNEESRIQVEALAKNAKDFGVEYYSENDIRQGIVHIIGPEQGFTLPGMTIVCGDSHTSTHGAFGALAHGIGTSEVEHVLATQTLIQRKAKNMLVRVDGQLPEGVTAKDIILAIIGEIGTAGGTGYVIEYAGEAIRSLSMEGRMTICNMSIEGGARAGLIAADETTFAYVKDKPRAPKGAAWDAALAYWKTLQSDEGAHFDKVIVLDAAKLPPIVSWGSSPEDVVSVQGVVPNPEEITDENKRTSKIRALDYMGLTPGTKITDIALDRVFIGSCTNGRIEDLRAAAKVIEGKTVNPRVNAMIVPGSGLVKEQAEAEGLDKIFLAAGFDWREPGCSMCLAMNDDRLKPHERCASTSNRNFEGRQGFKGRTHLVSPAMAAAAAIAGHFVDIRDWK.

[4Fe-4S] cluster contacts are provided by C350, C410, and C413.

This sequence belongs to the aconitase/IPM isomerase family. LeuC type 1 subfamily. Heterodimer of LeuC and LeuD. [4Fe-4S] cluster is required as a cofactor.

It catalyses the reaction (2R,3S)-3-isopropylmalate = (2S)-2-isopropylmalate. The protein operates within amino-acid biosynthesis; L-leucine biosynthesis; L-leucine from 3-methyl-2-oxobutanoate: step 2/4. Functionally, catalyzes the isomerization between 2-isopropylmalate and 3-isopropylmalate, via the formation of 2-isopropylmaleate. The sequence is that of 3-isopropylmalate dehydratase large subunit from Mesorhizobium japonicum (strain LMG 29417 / CECT 9101 / MAFF 303099) (Mesorhizobium loti (strain MAFF 303099)).